The primary structure comprises 208 residues: Thioesterase 1/protease 1/lysophospholipase L1 (208 aa).

The first 26 residues, Met-1–Ala-26, serve as a signal peptide directing secretion. Residue Ser-36 is the Nucleophile of the active site. Positions 70 and 99 each coordinate substrate. Residues Asp-180 and His-183 contribute to the active site.

The protein belongs to the 'GDSL' lipolytic enzyme family. Monomer or homotetramer.

Its subcellular location is the periplasm. The catalysed reaction is a fatty acyl-CoA + H2O = a fatty acid + CoA + H(+). The enzyme catalyses hexadecanoyl-CoA + H2O = hexadecanoate + CoA + H(+). It carries out the reaction (9Z)-hexadecenoyl-CoA + H2O = (9Z)-hexadecenoate + CoA + H(+). It catalyses the reaction octadecanoyl-CoA + H2O = octadecanoate + CoA + H(+). The catalysed reaction is (9Z)-octadecenoyl-CoA + H2O = (9Z)-octadecenoate + CoA + H(+). The enzyme catalyses (9Z)-octadecenoyl-[ACP] + H2O = (9Z)-octadecenoate + holo-[ACP] + H(+). It carries out the reaction (11Z)-octadecenoyl-CoA + H2O = (11Z)-octadecenoate + CoA + H(+). It catalyses the reaction tetradecanoyl-CoA + H2O = tetradecanoate + CoA + H(+). The catalysed reaction is (5Z,8Z,11Z,14Z)-eicosatetraenoyl-CoA + H2O = (5Z,8Z,11Z,14Z)-eicosatetraenoate + CoA + H(+). The enzyme catalyses dodecanoyl-CoA + H2O = dodecanoate + CoA + H(+). It carries out the reaction decanoyl-CoA + H2O = decanoate + CoA + H(+). It catalyses the reaction hexanoyl-CoA + H2O = hexanoate + CoA + H(+). The catalysed reaction is a 1-acyl-sn-glycero-3-phosphocholine + H2O = sn-glycerol 3-phosphocholine + a fatty acid + H(+). The enzyme catalyses a phenyl acetate + H2O = a phenol + acetate + H(+). It carries out the reaction a butanoate ester + H2O = an aliphatic alcohol + butanoate + H(+). It catalyses the reaction a hexanoate ester + H2O = an aliphatic alcohol + hexanoate + H(+). The catalysed reaction is an octanoate ester + H2O = an aliphatic alcohol + octanoate + H(+). Functionally, tesA is a multifunctional esterase that can act as a thioesterase, arylesterase, lysophospholipase and protease. The protein is Thioesterase 1/protease 1/lysophospholipase L1 (tesA) of Escherichia coli O6:H1 (strain CFT073 / ATCC 700928 / UPEC).